A 694-amino-acid chain; its full sequence is Polyphosphate kinase (694 aa).

Asparagine 45 serves as a coordination point for ATP. Mg(2+)-binding residues include arginine 367 and arginine 397. The active-site Phosphohistidine intermediate is the histidine 427. ATP is bound by residues tyrosine 460, arginine 553, and histidine 580.

This sequence belongs to the polyphosphate kinase 1 (PPK1) family. Requires Mg(2+) as cofactor. In terms of processing, an intermediate of this reaction is the autophosphorylated ppk in which a phosphate is covalently linked to a histidine residue through a N-P bond.

The catalysed reaction is [phosphate](n) + ATP = [phosphate](n+1) + ADP. Functionally, catalyzes the reversible transfer of the terminal phosphate of ATP to form a long-chain polyphosphate (polyP). The sequence is that of Polyphosphate kinase from Campylobacter jejuni subsp. doylei (strain ATCC BAA-1458 / RM4099 / 269.97).